A 667-amino-acid chain; its full sequence is Acyl-coenzyme A oxidase acox-3 (667 aa).

FAD is bound by residues Phe138–Thr141, Gly146–Ser147, Gly178, Arg313, Gln334–Arg337, and Gly410. Residue Glu433 is the Proton acceptor of the active site. Glu435 is a binding site for FAD. Positions Ser665–Leu667 match the Microbody targeting signal motif.

It belongs to the acyl-CoA oxidase family. Homodimer. It depends on FAD as a cofactor. Expressed in intestine.

Its subcellular location is the peroxisome. It carries out the reaction IC-asc-C7-CoA + O2 = IC-asc-DeltaC7-CoA + H2O2. It catalyses the reaction IC-asc-C9-CoA + O2 = IC-asc-DeltaC9-CoA + H2O2. The enzyme catalyses asc-C13-CoA + O2 = asc-DeltaC13-CoA + H2O2. Its pathway is lipid metabolism; peroxisomal fatty acid beta-oxidation. In contrast to other acyl-coenzyme A oxidases which bind to and are activated by ATP, does not bind ATP. Involved in the first step of peroxisomal beta-oxidation by catalyzing the desaturation of fatty acid-derived side chains of ascaroside pheromones, which regulates development and behavior. Specifically, shortens indol-3-carbonyl(IC)-ascarosides with 7-carbon (IC-asc-C7) or 9-carbon (IC-asc-C9) side chains and contributes to the shortening of ascarosides with 13-carbon (asc-C13) and 15-carbon (asc-C15) side chains. The sequence is that of Acyl-coenzyme A oxidase acox-3 from Caenorhabditis elegans.